The chain runs to 417 residues: Gamma-glutamyl phosphate reductase (417 aa).

The protein belongs to the gamma-glutamyl phosphate reductase family.

Its subcellular location is the cytoplasm. It catalyses the reaction L-glutamate 5-semialdehyde + phosphate + NADP(+) = L-glutamyl 5-phosphate + NADPH + H(+). It functions in the pathway amino-acid biosynthesis; L-proline biosynthesis; L-glutamate 5-semialdehyde from L-glutamate: step 2/2. In terms of biological role, catalyzes the NADPH-dependent reduction of L-glutamate 5-phosphate into L-glutamate 5-semialdehyde and phosphate. The product spontaneously undergoes cyclization to form 1-pyrroline-5-carboxylate. This Aeromonas salmonicida (strain A449) protein is Gamma-glutamyl phosphate reductase.